Reading from the N-terminus, the 101-residue chain is Conopressin/conophysin, isoform 3 (101 aa).

A signal peptide is located at residue Ala-1. The cysteines at positions 2 and 7 are disulfide-linked. Gly-10 bears the Glycine amide mark. The propeptide occupies 11-18 (GKRNVDEG). Intrachain disulfides connect Cys-23/Cys-63, Cys-26/Cys-37, Cys-31/Cys-53, Cys-38/Cys-43, Cys-70/Cys-88, Cys-82/Cys-100, and Cys-89/Cys-94.

The protein belongs to the vasopressin/oxytocin family. Expressed by the venom gland.

The protein resides in the secreted. Functionally, targets vasopressin-oxytocin related receptors. Is more active on fish receptors than on their human counterparts, supporting an evolved role of this conopressin in the envenomation process. Acts as an agonist on zebrafish vasopressin receptors V1a1R (EC(50)=10.6 nM), V1a2R (EC(50)=44.06 nM, partial agonist), V2R (EC(50)=299.2 nM) and oxytocin receptor (EC(50)=353.73 nM, partial agonist). Shows a weaker activity on human receptors AVPR1B (EC(50)=51.92 nM), AVPR1A (EC(50)=123.78 nM), AVPR2 (EC(50)=299.2 nM) and oxytocin (OXTR) receptor (EC(50)=455.66 nM, partial agonist). In vivo, exhibits grooming and scratching behavior in mice, following intracerebral injection. The polypeptide is Conopressin/conophysin, isoform 3 (Conus monile (Necklace cone)).